The primary structure comprises 246 residues: Putative L,D-transpeptidase YafK (246 aa).

The first 19 residues, 1–19 (MRKIALILAMLLIPCVSFA), serve as a signal peptide directing secretion. The region spanning 44-174 (VYIQIFKEER…GQPSVQVSIY (131 aa)) is the L,D-TPase catalytic domain. His135 acts as the Proton donor/acceptor in catalysis. Catalysis depends on Cys143, which acts as the Nucleophile.

This sequence belongs to the YkuD family.

Its pathway is cell wall biogenesis; peptidoglycan biosynthesis. The chain is Putative L,D-transpeptidase YafK (yafK) from Escherichia coli O157:H7.